We begin with the raw amino-acid sequence, 84 residues long: Large ribosomal subunit protein bL27 (84 aa).

The segment at 1-22 is disordered; that stretch reads MAHKKAGGSTRNGRDSESKRLG.

Belongs to the bacterial ribosomal protein bL27 family.

The chain is Large ribosomal subunit protein bL27 from Shewanella sp. (strain MR-4).